We begin with the raw amino-acid sequence, 73 residues long: Protein BP4C (73 aa).

In terms of tissue distribution, pollen specific.

The sequence is that of Protein BP4C (BP4C) from Brassica napus (Rape).